Consider the following 114-residue polypeptide: Non-specific lipid-transfer protein 1 (114 aa).

The N-terminal stretch at 1–23 is a signal peptide; sequence MEMVSKIACFVLLCMVVVAPHAE. 4 disulfides stabilise this stretch: Cys-27-Cys-73, Cys-37-Cys-50, Cys-51-Cys-96, and Cys-71-Cys-110.

The protein belongs to the plant LTP family.

Functionally, plant non-specific lipid-transfer proteins transfer phospholipids as well as galactolipids across membranes. May play a role in wax or cutin deposition in the cell walls of expanding epidermal cells and certain secretory tissues. The protein is Non-specific lipid-transfer protein 1 (TSW12) of Solanum lycopersicum (Tomato).